A 193-amino-acid chain; its full sequence is CASP-like protein 2U1 (193 aa).

Topologically, residues 1-18 (MAMALALGGGQDAERKVK) are cytoplasmic. A helical transmembrane segment spans residues 19–39 (VAEVALRALLCGLGALAAALV). Topologically, residues 40–61 (ATDTQTRTFFSLQKKASYTDMK) are extracellular. The chain crosses the membrane as a helical span at residues 62 to 82 (AMVFLVDAAAVAAGYSLLQLA). The Cytoplasmic segment spans residues 83–113 (ARCCGGGAMSSGRGDGGGRGRALSWCVFSCD). Residues 114–134 (QALAYVLLAAVAAALQASVVA) form a helical membrane-spanning segment. The Extracellular portion of the chain corresponds to 135 to 156 (KRGQPELQWMGICALYGAFCRQ). Residues 157–177 (AGAGLATAVVAGLAAVLLAFL) traverse the membrane as a helical segment. At 178 to 193 (SAFNLFRLYGSGGTKS) the chain is on the cytoplasmic side.

This sequence belongs to the Casparian strip membrane proteins (CASP) family. As to quaternary structure, homodimer and heterodimers.

The protein resides in the cell membrane. The polypeptide is CASP-like protein 2U1 (Sorghum bicolor (Sorghum)).